Reading from the N-terminus, the 940-residue chain is Isoleucine--tRNA ligase (940 aa).

Residues 58 to 68 carry the 'HIGH' region motif; the sequence is PYANGSIHIGH. E564 is an L-isoleucyl-5'-AMP binding site. Residues 605-609 carry the 'KMSKS' region motif; it reads KMSKS. Residue K608 coordinates ATP. Zn(2+) is bound by residues C903, C906, C923, and C926.

It belongs to the class-I aminoacyl-tRNA synthetase family. IleS type 1 subfamily. Monomer. Requires Zn(2+) as cofactor.

The protein localises to the cytoplasm. The enzyme catalyses tRNA(Ile) + L-isoleucine + ATP = L-isoleucyl-tRNA(Ile) + AMP + diphosphate. In terms of biological role, catalyzes the attachment of isoleucine to tRNA(Ile). As IleRS can inadvertently accommodate and process structurally similar amino acids such as valine, to avoid such errors it has two additional distinct tRNA(Ile)-dependent editing activities. One activity is designated as 'pretransfer' editing and involves the hydrolysis of activated Val-AMP. The other activity is designated 'posttransfer' editing and involves deacylation of mischarged Val-tRNA(Ile). The sequence is that of Isoleucine--tRNA ligase from Shewanella sp. (strain W3-18-1).